The primary structure comprises 137 residues: Acidic phospholipase A2 PL-II (137 aa).

The first 17 residues, 1 to 17, serve as a signal peptide directing secretion; sequence AVCVSLLGASSIRPLPL. Cystine bridges form between Cys-28–Cys-89, Cys-44–Cys-136, Cys-46–Cys-62, Cys-61–Cys-117, Cys-68–Cys-110, Cys-78–Cys-103, and Cys-96–Cys-108. Ca(2+)-binding residues include Tyr-45, Gly-47, and Gly-49. His-65 is a catalytic residue. Asp-66 provides a ligand contact to Ca(2+). Asp-111 is a catalytic residue.

Requires Ca(2+) as cofactor. As to expression, expressed by the venom gland.

It is found in the secreted. It carries out the reaction a 1,2-diacyl-sn-glycero-3-phosphocholine + H2O = a 1-acyl-sn-glycero-3-phosphocholine + a fatty acid + H(+). Functionally, snake venom phospholipase A2 (PLA2) that may act in the hemostasis system of the prey. Exhibits hydrolytic activities, and prefers the anionic micelles (dPPC with deoxycholate) (54 umol/mg/min) to the zwitterionic micelles (dPPC with Triton X-100) (15 umol/mg/min). PLA2 catalyzes the calcium-dependent hydrolysis of the 2-acyl groups in 3-sn-phosphoglycerides. In Walterinnesia aegyptia (Desert black snake), this protein is Acidic phospholipase A2 PL-II.